Reading from the N-terminus, the 114-residue chain is uncharacterized protein (114 aa).

The protein to M.jannaschii MJ0310 and MJ0714.

This is an uncharacterized protein from Methanocaldococcus jannaschii (strain ATCC 43067 / DSM 2661 / JAL-1 / JCM 10045 / NBRC 100440) (Methanococcus jannaschii).